The following is a 563-amino-acid chain: Mitochondrial distribution and morphology protein 34 (563 aa).

An SMP-LTD domain is found at M1–L195. 2 disordered regions span residues E298–T460 and R535–L563. 2 stretches are compositionally biased toward polar residues: residues A303–R332 and S346–L357. Residues S365–S383 show a composition bias toward basic residues. Polar residues-rich tracts occupy residues T386–A402 and P444–T460.

The protein belongs to the MDM34 family. As to quaternary structure, component of the ER-mitochondria encounter structure (ERMES) or MDM complex, composed of mmm1, mdm10, mdm12 and mdm34.

Its subcellular location is the mitochondrion outer membrane. Functionally, component of the ERMES/MDM complex, which serves as a molecular tether to connect the endoplasmic reticulum (ER) and mitochondria. Components of this complex are involved in the control of mitochondrial shape and protein biogenesis, and function in nonvesicular lipid trafficking between the ER and mitochondria. Mdm34 is required for the interaction of the ER-resident membrane protein mmm1 and the outer mitochondrial membrane-resident beta-barrel protein mdm10. The protein is Mitochondrial distribution and morphology protein 34 of Sclerotinia sclerotiorum (strain ATCC 18683 / 1980 / Ss-1) (White mold).